We begin with the raw amino-acid sequence, 233 residues long: Glyceraldehyde 3-phosphate phosphatase (233 aa).

The protein belongs to the HAD-like hydrolase superfamily. Requires Mg(2+) as cofactor.

Its function is as follows. Catalyzes the dephosphorylation of D,L-glyceraldehyde 3-phosphate in vitro. The chain is Glyceraldehyde 3-phosphate phosphatase from Methanopyrus kandleri (strain AV19 / DSM 6324 / JCM 9639 / NBRC 100938).